Reading from the N-terminus, the 203-residue chain is Pacifastin-like protease inhibitor cvp4 (203 aa).

A signal peptide spans 1–19 (MGFLACALLVVATAHAATA). 3 consecutive Pacifastin domains span residues 23–59 (PETC…CDRN), 85–121 (DEPC…CDRN), and 147–184 (DESC…CDRY). 6 cysteine pairs are disulfide-bonded: Cys26-Cys41, Cys36-Cys56, Cys39-Cys51, Cys88-Cys103, Cys98-Cys118, and Cys101-Cys113. Basic and acidic residues predominate over residues 129-148 (RKYPEPEKWNSEKERKKSDE). The segment at 129–150 (RKYPEPEKWNSEKERKKSDESC) is disordered. 3 disulfide bridges follow: Cys150–Cys165, Cys160–Cys181, and Cys163–Cys176.

Belongs to the protease inhibitor I19 family. In terms of tissue distribution, expressed by the venom gland.

It is found in the secreted. Its function is as follows. Inhibits trypsin activity and prophenoloxidase (PPO) activation, an enzyme essential for both clotting and insect innate immune responses. It does not inhibit activity of chymotrypsin and protease K, and has no effect on phenoloxidase (PO) activity. This Pimpla hypochondriaca (Parasitoid wasp) protein is Pacifastin-like protease inhibitor cvp4.